Consider the following 317-residue polypeptide: Methionyl-tRNA formyltransferase (317 aa).

Residue 109–112 (SLLP) participates in (6S)-5,6,7,8-tetrahydrofolate binding.

The protein belongs to the Fmt family.

It catalyses the reaction L-methionyl-tRNA(fMet) + (6R)-10-formyltetrahydrofolate = N-formyl-L-methionyl-tRNA(fMet) + (6S)-5,6,7,8-tetrahydrofolate + H(+). Functionally, attaches a formyl group to the free amino group of methionyl-tRNA(fMet). The formyl group appears to play a dual role in the initiator identity of N-formylmethionyl-tRNA by promoting its recognition by IF2 and preventing the misappropriation of this tRNA by the elongation apparatus. The protein is Methionyl-tRNA formyltransferase of Desulforamulus reducens (strain ATCC BAA-1160 / DSM 100696 / MI-1) (Desulfotomaculum reducens).